The following is a 341-amino-acid chain: L-threonine 3-dehydrogenase (341 aa).

Zn(2+) is bound at residue Cys38. Active-site charge relay system residues include Thr40 and His43. Zn(2+) contacts are provided by His63, Glu64, Cys93, Cys96, Cys99, and Cys107. Residues Ile175, Asp195, Arg200, Leu262–Ile264, and Ile286–Tyr287 contribute to the NAD(+) site.

Belongs to the zinc-containing alcohol dehydrogenase family. Homotetramer. Zn(2+) is required as a cofactor.

Its subcellular location is the cytoplasm. The enzyme catalyses L-threonine + NAD(+) = (2S)-2-amino-3-oxobutanoate + NADH + H(+). Its pathway is amino-acid degradation; L-threonine degradation via oxydo-reductase pathway; glycine from L-threonine: step 1/2. Catalyzes the NAD(+)-dependent oxidation of L-threonine to 2-amino-3-ketobutyrate. This Salmonella typhi protein is L-threonine 3-dehydrogenase.